Consider the following 356-residue polypeptide: Cysteine protease XCP2 (356 aa).

A signal peptide spans 1–26 (MALSSPSRILCFALALSAASLSLSFA). Residues 27 to 137 (SSHDYSIVGY…AEFAYRDVEA (111 aa)) constitute a propeptide, activation peptide. 3 disulfides stabilise this stretch: C159-C201, C193-C234, and C292-C343. Residue C162 is part of the active site. A glycan (N-linked (GlcNAc...) asparagine) is linked at N181. Catalysis depends on residues H298 and N318.

The protein belongs to the peptidase C1 family. As to quaternary structure, interacts with PRN2. Mostly expressed in roots, stems and flowers. Confined to tracheary elements, and specifically to xylem.

It is found in the vacuole. The protein localises to the cell membrane. Its function is as follows. Cysteine protease involved in xylem tracheary element (TE) autolysis during xylogenesis in roots. Participates in micro autolysis within the intact central vacuole before mega autolysis is initiated by tonoplast implosion. Involved in susceptibility to the bacterial plant pathogen Ralstonia solanacearum. The sequence is that of Cysteine protease XCP2 from Arabidopsis thaliana (Mouse-ear cress).